Reading from the N-terminus, the 964-residue chain is A-type ATP synthase subunit A (964 aa).

The DOD-type homing endonuclease domain maps to 392-518 (FLGYLMANGT…LSYLFAKLGI (127 aa)).

This sequence belongs to the ATPase alpha/beta chains family. In terms of assembly, has multiple subunits with at least A(3), B(3), C, D, E, F, H, I and proteolipid K(x). Post-translationally, this protein undergoes a protein self splicing that involves a post-translational excision of the VDE intervening region (intein) followed by peptide ligation.

The protein localises to the cell membrane. The catalysed reaction is ATP + H2O + 4 H(+)(in) = ADP + phosphate + 5 H(+)(out). Its function is as follows. Component of the A-type ATP synthase that produces ATP from ADP in the presence of a proton gradient across the membrane. The A chain is the catalytic subunit. This is A-type ATP synthase subunit A from Pyrococcus horikoshii (strain ATCC 700860 / DSM 12428 / JCM 9974 / NBRC 100139 / OT-3).